A 357-amino-acid polypeptide reads, in one-letter code: MMKKIRKVALAVGGSGGHIVPALSVKEAFSREGIDVLLLGKGLKNHPSLQQGISYREIPSGLPTVLNPIKIMSRTLSLCSGYLKARKELKIFDPDLVIGFGSYHSLPVLLAGLSHKIPLFLHEQNLVPGKVNQLFSRYARGIGVNFSPVTKHFRCPAEEVFLPKRSFSLGSPMMKRCTNHTPTICVVGGSQGAQILNTCVPQALVKLVNKYPNMYVHHIVGPKSDVMKVQHVYNRGEVLCCVKPFEEQLLDVLLAADLVISRAGATILEEILWAKVPGILIPYPGAYGHQEVNAKFFVDVLEGGTMILEKELTEKLLVEKVTFALDSHNREKQRNSLAAYSQQRSTKTFHAFICECL.

Residues serine 15–glycine 17, asparagine 125, serine 190, and glutamine 290 contribute to the UDP-N-acetyl-alpha-D-glucosamine site.

This sequence belongs to the glycosyltransferase 28 family. MurG subfamily.

It localises to the cell inner membrane. The enzyme catalyses di-trans,octa-cis-undecaprenyl diphospho-N-acetyl-alpha-D-muramoyl-L-alanyl-D-glutamyl-meso-2,6-diaminopimeloyl-D-alanyl-D-alanine + UDP-N-acetyl-alpha-D-glucosamine = di-trans,octa-cis-undecaprenyl diphospho-[N-acetyl-alpha-D-glucosaminyl-(1-&gt;4)]-N-acetyl-alpha-D-muramoyl-L-alanyl-D-glutamyl-meso-2,6-diaminopimeloyl-D-alanyl-D-alanine + UDP + H(+). The protein operates within cell wall biogenesis; peptidoglycan biosynthesis. Functionally, cell wall formation. Catalyzes the transfer of a GlcNAc subunit on undecaprenyl-pyrophosphoryl-MurNAc-pentapeptide (lipid intermediate I) to form undecaprenyl-pyrophosphoryl-MurNAc-(pentapeptide)GlcNAc (lipid intermediate II). The polypeptide is UDP-N-acetylglucosamine--N-acetylmuramyl-(pentapeptide) pyrophosphoryl-undecaprenol N-acetylglucosamine transferase (Chlamydia pneumoniae (Chlamydophila pneumoniae)).